Reading from the N-terminus, the 246-residue chain is Protein-lysine N-methyltransferase EFM6 (246 aa).

Residues tryptophan 51, glycine 87–glycine 89, aspartate 115, tryptophan 143, and alanine 169 each bind S-adenosyl-L-methionine.

Belongs to the class I-like SAM-binding methyltransferase superfamily. METTL21 family. EFM6 subfamily.

It is found in the cytoplasm. In terms of biological role, S-adenosyl-L-methionine-dependent protein-lysine N-methyltransferase that methylates elongation factor 1-alpha (TEF1 and TEF2) at 'Lys-390'. The polypeptide is Protein-lysine N-methyltransferase EFM6 (Saccharomyces cerevisiae (strain ATCC 204508 / S288c) (Baker's yeast)).